The chain runs to 270 residues: uncharacterized protein (270 aa).

It localises to the virion. This is an uncharacterized protein from Acanthamoeba polyphaga (Amoeba).